Here is a 266-residue protein sequence, read N- to C-terminus: Glutamate racemase (266 aa).

Substrate-binding positions include 7–8 (DS) and 39–40 (YG). Residue Cys70 is the Proton donor/acceptor of the active site. 71–72 (NT) provides a ligand contact to substrate. The active-site Proton donor/acceptor is the Cys186. 187–188 (TH) is a binding site for substrate.

Belongs to the aspartate/glutamate racemases family.

It catalyses the reaction L-glutamate = D-glutamate. Its pathway is cell wall biogenesis; peptidoglycan biosynthesis. Provides the (R)-glutamate required for cell wall biosynthesis. This is Glutamate racemase from Campylobacter curvus (strain 525.92).